The sequence spans 939 residues: UvrABC system protein A (939 aa).

32–39 is a binding site for ATP; the sequence is GLSGSGKS. Residues 252–279 form a C4-type zinc finger; that stretch reads CPDCGISIGEISPSMFSFNAPFGKCDVC. ABC transporter domains follow at residues 309–588 and 608–936; these read WGEG…KESI and AGKN…QYLK. 640 to 647 serves as a coordination point for ATP; the sequence is GVSGSGKS. The C4-type zinc finger occupies 739–765; it reads CEACKGDGIVRIEMQFLSDVYVPCDVC.

Belongs to the ABC transporter superfamily. UvrA family. As to quaternary structure, forms a heterotetramer with UvrB during the search for lesions.

It localises to the cytoplasm. The UvrABC repair system catalyzes the recognition and processing of DNA lesions. UvrA is an ATPase and a DNA-binding protein. A damage recognition complex composed of 2 UvrA and 2 UvrB subunits scans DNA for abnormalities. When the presence of a lesion has been verified by UvrB, the UvrA molecules dissociate. This chain is UvrABC system protein A, found in Clostridium acetobutylicum (strain ATCC 824 / DSM 792 / JCM 1419 / IAM 19013 / LMG 5710 / NBRC 13948 / NRRL B-527 / VKM B-1787 / 2291 / W).